The following is a 439-amino-acid chain: MLKVWEPQAFLEFLNRRRTEFYPEIEAQVRAILERVRREGDGALYAFTRQFDGADLEATGLRVTEAEYREAEAAVSAAFRAALQVAVENIAAFHRPQVPTSWFTTRPDGTIVGQRVTPVDRAGVYVPGGSAPLFSCLLMTAIPAVVAGVPEVIVCTPPDRNGRIDPHMLVAARAAGVKDVYKVGGAQAIGAMAYGTATVPRVDKIAGPGNYYVTLAKKLVFGPVGIDMLAGPTEVMAVDDGSVDAEWLAADLLSQAEHPNGMVILVTTAGPERIAAVGAAMARHTAALPRAETIRRSVAELGAALAVDTLEEAADLVNAVGPEHLEVGVADPWAFLPLVRHAGSIFLGRWTPEAMGDYIAGPSNVIPTEGTARYASPVCVETFIKRSAVTCYSEAAFRAQAPHAVRLALTEDLLAHAASMQIRLAKPDGESPSEGREAG.

Positions 125, 187, and 210 each coordinate NAD(+). Substrate contacts are provided by T233, Q255, and H258. Residues Q255 and H258 each contribute to the Zn(2+) site. Residues E323 and H324 each act as proton acceptor in the active site. Positions 324, 357, 411, and 416 each coordinate substrate. D357 provides a ligand contact to Zn(2+). H416 serves as a coordination point for Zn(2+).

Belongs to the histidinol dehydrogenase family. Zn(2+) is required as a cofactor.

The enzyme catalyses L-histidinol + 2 NAD(+) + H2O = L-histidine + 2 NADH + 3 H(+). Its pathway is amino-acid biosynthesis; L-histidine biosynthesis; L-histidine from 5-phospho-alpha-D-ribose 1-diphosphate: step 9/9. In terms of biological role, catalyzes the sequential NAD-dependent oxidations of L-histidinol to L-histidinaldehyde and then to L-histidine. The polypeptide is Histidinol dehydrogenase (Symbiobacterium thermophilum (strain DSM 24528 / JCM 14929 / IAM 14863 / T)).